Consider the following 594-residue polypeptide: Homeobox protein prospero homolog 1 (594 aa).

2 stretches are compositionally biased toward polar residues: residues 1 to 13 (MSSG…ATAQ) and 36 to 50 (PPVN…SSNR). Disordered stretches follow at residues 1–20 (MSSG…NGFS), 30–180 (IYYS…FQPQ), and 358–389 (DTSS…SASA). Positions 73–101 (STSVSSNSSSSSSTSNTNSTPSSSSTSSK) are enriched in low complexity. Positions 105–117 (EGMTETETMTASI) are enriched in polar residues. Positions 118 to 135 (EQEKVIQNEESEAGKDGM) are enriched in basic and acidic residues. The segment covering 136-162 (EEHDDGMNDFEIIDDTNDEVEESEERE) has biased composition (acidic residues). Positions 369–378 (KVEIKKEDAM) are enriched in basic and acidic residues. A compositionally biased stretch (low complexity) spans 379 to 389 (SSRASPLSASA). Residues 435–493 (SSMLTPMHLRKAKLMFFYTRYPNSNLLKSYFPDIRFNKNNTAQLVKWFSNFREFYYNQM) enclose the Prospero-type homeo domain. Residues 435–593 (SSMLTPMHLR…KEPNFLERLE (159 aa)) form a homeo-Prospero region. One can recognise a Prospero domain in the interval 494 to 593 (EKFARQALAE…KEPNFLERLE (100 aa)).

The protein belongs to the Prospero homeodomain family.

It localises to the nucleus. Functionally, transcription factor involved in developmental processes. Controls the transcription of genes required for excretory canal formation. The sequence is that of Homeobox protein prospero homolog 1 from Caenorhabditis elegans.